The following is a 308-amino-acid chain: Mu-like prophage FluMu major head subunit (308 aa).

To phage Mu protein T.

The protein is Mu-like prophage FluMu major head subunit of Haemophilus influenzae (strain ATCC 51907 / DSM 11121 / KW20 / Rd).